We begin with the raw amino-acid sequence, 785 residues long: Protein PHTF2 (785 aa).

Residues 46 to 191 enclose the PHTF domain; it reads IQCLIGAYDQ…VHCQIVSTRT (146 aa). The next 2 helical transmembrane spans lie at 136 to 156 and 164 to 184; these read VIFF…VLFC and IPLT…TVHC. 2 disordered regions span residues 190 to 239 and 304 to 401; these read RTPK…GTST and RPEE…PESE. Residues 200–209 show a composition bias toward basic residues; that stretch reads GKRRRKLRKA. A compositionally biased stretch (basic and acidic residues) spans 210–219; that stretch reads AHLEVHREGD. Polar residues-rich tracts occupy residues 220–239 and 309–333; these read GSST…GTST and AWNT…VSDE. A glycan (N-linked (GlcNAc...) asparagine) is linked at Asn-329. A compositionally biased stretch (basic residues) spans 359–369; that stretch reads RNRKSHHYKKH. Residues 378–390 show a composition bias toward low complexity; that stretch reads SGTSCSSRCSSSR. Residues 391-400 show a composition bias toward basic and acidic residues; it reads QDSESARPES. 4 consecutive transmembrane segments (helical) span residues 497–517, 553–573, 634–654, and 668–688; these read IGYQ…PFVF, VIIS…LLCV, VIVS…CAQL, and WELV…VTLG. 2 N-linked (GlcNAc...) asparagine glycosylation sites follow: Asn-697 and Asn-756. A helical membrane pass occupies residues 760 to 780; sequence VVILSAVSGVISDLLGFNLKL.

The protein resides in the membrane. This is Protein PHTF2 (PHTF2) from Homo sapiens (Human).